The chain runs to 208 residues: Methylthioribulose-1-phosphate dehydratase (208 aa).

Zn(2+)-binding residues include His96 and His98.

It belongs to the aldolase class II family. MtnB subfamily. Zn(2+) is required as a cofactor.

The enzyme catalyses 5-(methylsulfanyl)-D-ribulose 1-phosphate = 5-methylsulfanyl-2,3-dioxopentyl phosphate + H2O. The protein operates within amino-acid biosynthesis; L-methionine biosynthesis via salvage pathway; L-methionine from S-methyl-5-thio-alpha-D-ribose 1-phosphate: step 2/6. Functionally, catalyzes the dehydration of methylthioribulose-1-phosphate (MTRu-1-P) into 2,3-diketo-5-methylthiopentyl-1-phosphate (DK-MTP-1-P). This chain is Methylthioribulose-1-phosphate dehydratase, found in Pseudomonas fluorescens (strain Pf0-1).